The primary structure comprises 162 residues: SCF ubiquitin ligase complex protein SKP1b (162 aa).

The residue at position 2 (serine 2) is an N-acetylserine. Positions 100–162 (ILAANYLDIK…NEWCEDKGGN (63 aa)) are interaction with the F-box domain of F-box proteins. 4-hydroxyproline is present on proline 143. An O-linked (GlcNAc...) hydroxyproline glycan is attached at proline 143.

This sequence belongs to the SKP1 family. As to quaternary structure, multiprotein complex (SCF) with cullin and F-box-containing protein. Capable of undergoing aggregation. In terms of processing, O-linked glycan consists of linear Gal-Gal-Fuc-Gal-GlcNAc. Post-translationally, not glycosylated in prespore cells. FpaA and fpaB seem to be identically glycosylated. Glycosylation is required for nuclear enrichment. In terms of processing, hydroxylated by phyA.

Its subcellular location is the cytoplasm. It localises to the nucleus. The sequence is that of SCF ubiquitin ligase complex protein SKP1b (fpaB-1) from Dictyostelium discoideum (Social amoeba).